Here is a 730-residue protein sequence, read N- to C-terminus: Elongation factor 2 (730 aa).

The tr-type G domain maps to 19 to 229 (DYIRNIGIVA…NITFKDIIQY (211 aa)). GTP is bound by residues 28–35 (AHIDHGKT), 94–98 (DTPGH), and 148–151 (NKVD). Position 597 is a diphthamide (H597).

It belongs to the TRAFAC class translation factor GTPase superfamily. Classic translation factor GTPase family. EF-G/EF-2 subfamily.

The protein resides in the cytoplasm. Functionally, catalyzes the GTP-dependent ribosomal translocation step during translation elongation. During this step, the ribosome changes from the pre-translocational (PRE) to the post-translocational (POST) state as the newly formed A-site-bound peptidyl-tRNA and P-site-bound deacylated tRNA move to the P and E sites, respectively. Catalyzes the coordinated movement of the two tRNA molecules, the mRNA and conformational changes in the ribosome. This Methanosphaera stadtmanae (strain ATCC 43021 / DSM 3091 / JCM 11832 / MCB-3) protein is Elongation factor 2.